The primary structure comprises 160 residues: uncharacterized protein (160 aa).

A helical membrane pass occupies residues 8–28 (LLFILVFISGFILFTVYSYTA).

Its subcellular location is the membrane. This is an uncharacterized protein from Escherichia coli (strain K12).